A 331-amino-acid polypeptide reads, in one-letter code: DNA-directed RNA polymerase subunit alpha (331 aa).

Positions 1–223 (MDQKRPQLKA…DELTVFGNVE (223 aa)) are alpha N-terminal domain (alpha-NTD). An alpha C-terminal domain (alpha-CTD) region spans residues 260–331 (PYPADLDTPR…LAQFGLALRD (72 aa)).

Belongs to the RNA polymerase alpha chain family. In terms of assembly, homodimer. The RNAP catalytic core consists of 2 alpha, 1 beta, 1 beta' and 1 omega subunit. When a sigma factor is associated with the core the holoenzyme is formed, which can initiate transcription.

The enzyme catalyses RNA(n) + a ribonucleoside 5'-triphosphate = RNA(n+1) + diphosphate. Functionally, DNA-dependent RNA polymerase catalyzes the transcription of DNA into RNA using the four ribonucleoside triphosphates as substrates. The polypeptide is DNA-directed RNA polymerase subunit alpha (Deinococcus geothermalis (strain DSM 11300 / CIP 105573 / AG-3a)).